A 158-amino-acid chain; its full sequence is Protein Smg homolog (158 aa).

The protein belongs to the Smg family.

This chain is Protein Smg homolog, found in Vibrio atlanticus (strain LGP32) (Vibrio splendidus (strain Mel32)).